The chain runs to 321 residues: Olfactory receptor 5P60 (321 aa).

The Extracellular segment spans residues 1 to 28 (MAFLHNGNHTAVTEFILLGLTDDPVLRI). The N-linked (GlcNAc...) asparagine glycan is linked to Asn8. A helical transmembrane segment spans residues 29–49 (VLFTIILCIYLVTVSGNLSTI). Residues 50 to 57 (LLIRVSSQ) lie on the Cytoplasmic side of the membrane. The helical transmembrane segment at 58-78 (LHHPMYFFLSHLASADIGYSS) threads the bilayer. Over 79–102 (SVTPNMLVNFLVKQNTISYIGCSI) the chain is Extracellular. A disulfide bridge links Cys100 with Cys192. The chain crosses the membrane as a helical span at residues 103–123 (QFGSAAFFGGLECFLLAVMAY). The Cytoplasmic segment spans residues 124 to 136 (DRFVAICNPLLYS). Residues 137 to 157 (TKMSTQVCVQLVVGSYIGGFL) traverse the membrane as a helical segment. Over 158-199 (NASFATVSFLFLFFCGPNIINHFFCDFAPLIELSCSDVRISV) the chain is Extracellular. A helical membrane pass occupies residues 200–220 (LVTSFSAGTVTMLTVLVIAIS). At 221 to 240 (YTYILITILKMRSTEGRHKA) the chain is on the cytoplasmic side. A helical membrane pass occupies residues 241-261 (FSTCTSHLTAVSLFYGTITFI). Over 262–274 (YVMPKSRYSTDQN) the chain is Extracellular. Residues 275-295 (KVVSVFYMVVIPMLNPLIYSL) traverse the membrane as a helical segment. The Cytoplasmic segment spans residues 296-321 (RNNEIKGALRRHLGKKIFSQSNILFY).

The protein belongs to the G-protein coupled receptor 1 family.

The protein resides in the cell membrane. Functionally, potential odorant receptor. In Mus musculus (Mouse), this protein is Olfactory receptor 5P60.